The chain runs to 261 residues: Immediate-early protein IE-0 (261 aa).

The RING-type zinc finger occupies 212–257 (CNVCKEISTDERFLKPKECCEYAICNACCVNMWKTATTHAKCPACR).

In terms of assembly, interacts with proteins C42 and FP25. Interacts with host beta-tubulin. Interacts with Ac66 and vUb.

The protein resides in the host nucleus. It is found in the host cytoplasm. Its subcellular location is the virion. Functionally, putative viral E3 ligase that plays an essential regulatory role in both viral DNA replication and transcriptional transactivation. The role in transcription has been shown to include activation of gene expression from early viral promoters. Also promotes the efficient egress of nucleocapsids from the host nucleus. May act as an E3 ligase that promotes ubiquitination of nucleocapsids proteins by vUbi and subsequent viral egress for the host nucleus. The protein is Immediate-early protein IE-0 (IE0) of Lepidoptera (butterflies and moths).